A 135-amino-acid chain; its full sequence is Large ribosomal subunit protein uL16c (135 aa).

Belongs to the universal ribosomal protein uL16 family. Part of the 50S ribosomal subunit.

The protein localises to the plastid. It is found in the chloroplast. The polypeptide is Large ribosomal subunit protein uL16c (Acorus calamus var. americanus (American sweet flag)).